The primary structure comprises 76 residues: Large ribosomal subunit protein eL20 (76 aa).

This sequence belongs to the eukaryotic ribosomal protein eL20 family. Part of the 50S ribosomal subunit. Binds 23S rRNA.

The chain is Large ribosomal subunit protein eL20 from Methanococcus maripaludis (strain C7 / ATCC BAA-1331).